The primary structure comprises 100 residues: NADH-quinone oxidoreductase subunit K (100 aa).

Helical transmembrane passes span 2-22 (IPLQ…LTGV), 28-48 (LLFM…AFVV), and 60-80 (VMFI…LALL).

The protein belongs to the complex I subunit 4L family. In terms of assembly, NDH-1 is composed of 13 different subunits. Subunits NuoA, H, J, K, L, M, N constitute the membrane sector of the complex.

The protein localises to the cell inner membrane. It catalyses the reaction a quinone + NADH + 5 H(+)(in) = a quinol + NAD(+) + 4 H(+)(out). Functionally, NDH-1 shuttles electrons from NADH, via FMN and iron-sulfur (Fe-S) centers, to quinones in the respiratory chain. The immediate electron acceptor for the enzyme in this species is believed to be ubiquinone. Couples the redox reaction to proton translocation (for every two electrons transferred, four hydrogen ions are translocated across the cytoplasmic membrane), and thus conserves the redox energy in a proton gradient. The polypeptide is NADH-quinone oxidoreductase subunit K (Erwinia tasmaniensis (strain DSM 17950 / CFBP 7177 / CIP 109463 / NCPPB 4357 / Et1/99)).